The chain runs to 280 residues: GTP-binding protein rhoC (280 aa).

Residues 13–59 form a disordered region; that stretch reads TSRRHSLVTPPPSVAPRQNRMRSQSVRVSNGTVSTDNSMSSGRVSEA. Residues 33–59 are compositionally biased toward polar residues; sequence MRSQSVRVSNGTVSTDNSMSSGRVSEA. Residue 76-83 participates in GTP binding; the sequence is GDGGCGKT. Residues 98–106 carry the Effector region motif; sequence YVPTVFENY. GTP is bound by residues 125–129 and 183–186; these read DTAGQ and LKSD. The disordered stretch occupies residues 251-275; sequence WDTRLPSSSGKPGGKPIGGKKIKKR. C277 is subject to Cysteine methyl ester. A lipid anchor (S-geranylgeranyl cysteine) is attached at C277. Positions 278-280 are cleaved as a propeptide — removed in mature form; it reads KIL.

The protein belongs to the small GTPase superfamily. Rho family.

It is found in the cell membrane. This Emericella nidulans (strain FGSC A4 / ATCC 38163 / CBS 112.46 / NRRL 194 / M139) (Aspergillus nidulans) protein is GTP-binding protein rhoC (rhoC).